An 85-amino-acid polypeptide reads, in one-letter code: Exodeoxyribonuclease 7 small subunit (85 aa).

Belongs to the XseB family. In terms of assembly, heterooligomer composed of large and small subunits.

The protein localises to the cytoplasm. The catalysed reaction is Exonucleolytic cleavage in either 5'- to 3'- or 3'- to 5'-direction to yield nucleoside 5'-phosphates.. Its function is as follows. Bidirectionally degrades single-stranded DNA into large acid-insoluble oligonucleotides, which are then degraded further into small acid-soluble oligonucleotides. The chain is Exodeoxyribonuclease 7 small subunit from Alkalilimnicola ehrlichii (strain ATCC BAA-1101 / DSM 17681 / MLHE-1).